Consider the following 98-residue polypeptide: MSADPRHYDIVVSPVITEKATNLTEQNKVVFRVAPKATKPQIKEAVEKLFDVKVTAVNTLVTKGKKKIFRGLRGQRSDVKKAIVTLAEGHTIDVTTGL.

It belongs to the universal ribosomal protein uL23 family. As to quaternary structure, part of the 50S ribosomal subunit. Contacts protein L29, and trigger factor when it is bound to the ribosome.

One of the early assembly proteins it binds 23S rRNA. One of the proteins that surrounds the polypeptide exit tunnel on the outside of the ribosome. Forms the main docking site for trigger factor binding to the ribosome. The protein is Large ribosomal subunit protein uL23 of Methylobacterium radiotolerans (strain ATCC 27329 / DSM 1819 / JCM 2831 / NBRC 15690 / NCIMB 10815 / 0-1).